The sequence spans 411 residues: Growth-regulating factor 7 (411 aa).

A QLQ domain is found at 38–73; the sequence is PFTPTQWMELEHQALIYKHIVANAPVPAGLLLPIRR. The WRC domain occupies 108-152; the sequence is DSEPGRCRRTDGKKWRCSRDAVVDQKYCERHINRGRHRSRKHVEG. 2 consecutive short sequence motifs (bipartite nuclear localization signal) follow at residues 113–123 and 141–148; these read RCRRTDGKKWR and RGRHRSRK. Positions 333 to 369 are disordered; that stretch reads FFTNTSSASDDKGKSRHPPSLNLLADGHTTSPQLQSP. Residues 360 to 369 are compositionally biased toward polar residues; the sequence is HTTSPQLQSP.

Belongs to the GRF family.

The protein localises to the nucleus. Functionally, transcription activator that plays a regulatory role in gibberellin-induced stem elongation. This is Growth-regulating factor 7 (GRF7) from Oryza sativa subsp. japonica (Rice).